Reading from the N-terminus, the 590-residue chain is Aspartate--tRNA(Asp/Asn) ligase (590 aa).

Glutamate 170 contributes to the L-aspartate binding site. Positions 194-197 (QLFK) are aspartate. Residue arginine 216 coordinates L-aspartate. ATP is bound by residues 216 to 218 (RDE) and glutamine 225. Histidine 448 is a binding site for L-aspartate. Position 482 (glutamate 482) interacts with ATP. Position 489 (arginine 489) interacts with L-aspartate. 534 to 537 (GWDR) is an ATP binding site. Residues 559-590 (GGVDPLTEAPAPITAQQRKESGIDAKPGKDGA) are disordered. Positions 575 to 590 (QRKESGIDAKPGKDGA) are enriched in basic and acidic residues.

Belongs to the class-II aminoacyl-tRNA synthetase family. Type 1 subfamily. As to quaternary structure, homodimer.

The protein resides in the cytoplasm. The catalysed reaction is tRNA(Asx) + L-aspartate + ATP = L-aspartyl-tRNA(Asx) + AMP + diphosphate. In terms of biological role, aspartyl-tRNA synthetase with relaxed tRNA specificity since it is able to aspartylate not only its cognate tRNA(Asp) but also tRNA(Asn). Reaction proceeds in two steps: L-aspartate is first activated by ATP to form Asp-AMP and then transferred to the acceptor end of tRNA(Asp/Asn). This chain is Aspartate--tRNA(Asp/Asn) ligase, found in Mycolicibacterium gilvum (strain PYR-GCK) (Mycobacterium gilvum (strain PYR-GCK)).